We begin with the raw amino-acid sequence, 197 residues long: Imidazoleglycerol-phosphate dehydratase (197 aa).

Belongs to the imidazoleglycerol-phosphate dehydratase family.

The protein localises to the cytoplasm. The enzyme catalyses D-erythro-1-(imidazol-4-yl)glycerol 3-phosphate = 3-(imidazol-4-yl)-2-oxopropyl phosphate + H2O. The protein operates within amino-acid biosynthesis; L-histidine biosynthesis; L-histidine from 5-phospho-alpha-D-ribose 1-diphosphate: step 6/9. The polypeptide is Imidazoleglycerol-phosphate dehydratase (Nitrosomonas europaea (strain ATCC 19718 / CIP 103999 / KCTC 2705 / NBRC 14298)).